The sequence spans 239 residues: uncharacterized protein (239 aa).

3 helical membrane passes run 125–144, 149–171, and 197–216; these read LAII…LILY, IFVL…FLFL, and SVLN…GILF.

It localises to the cell membrane. This is an uncharacterized protein from Aquifex aeolicus (strain VF5).